The following is a 171-amino-acid chain: Peptide deformylase (171 aa).

Residues C94 and H136 each coordinate Fe cation. E137 is a catalytic residue. Fe cation is bound at residue H140.

It belongs to the polypeptide deformylase family. It depends on Fe(2+) as a cofactor.

The catalysed reaction is N-terminal N-formyl-L-methionyl-[peptide] + H2O = N-terminal L-methionyl-[peptide] + formate. Functionally, removes the formyl group from the N-terminal Met of newly synthesized proteins. Requires at least a dipeptide for an efficient rate of reaction. N-terminal L-methionine is a prerequisite for activity but the enzyme has broad specificity at other positions. The protein is Peptide deformylase of Afipia carboxidovorans (strain ATCC 49405 / DSM 1227 / KCTC 32145 / OM5) (Oligotropha carboxidovorans).